Here is a 273-residue protein sequence, read N- to C-terminus: Formamidopyrimidine-DNA glycosylase (273 aa).

Pro-2 (schiff-base intermediate with DNA) is an active-site residue. Residue Glu-3 is the Proton donor of the active site. The active-site Proton donor; for beta-elimination activity is Lys-59. Residues His-92 and Arg-111 each coordinate DNA. The FPG-type zinc finger occupies 239–273; the sequence is KVYGKTDEPCVVCGTPIEKIKLNGRGTHFCPNCQK. Arg-263 serves as the catalytic Proton donor; for delta-elimination activity.

The protein belongs to the FPG family. As to quaternary structure, monomer. It depends on Zn(2+) as a cofactor.

The catalysed reaction is Hydrolysis of DNA containing ring-opened 7-methylguanine residues, releasing 2,6-diamino-4-hydroxy-5-(N-methyl)formamidopyrimidine.. The enzyme catalyses 2'-deoxyribonucleotide-(2'-deoxyribose 5'-phosphate)-2'-deoxyribonucleotide-DNA = a 3'-end 2'-deoxyribonucleotide-(2,3-dehydro-2,3-deoxyribose 5'-phosphate)-DNA + a 5'-end 5'-phospho-2'-deoxyribonucleoside-DNA + H(+). Involved in base excision repair of DNA damaged by oxidation or by mutagenic agents. Acts as a DNA glycosylase that recognizes and removes damaged bases. Has a preference for oxidized purines, such as 7,8-dihydro-8-oxoguanine (8-oxoG). Has AP (apurinic/apyrimidinic) lyase activity and introduces nicks in the DNA strand. Cleaves the DNA backbone by beta-delta elimination to generate a single-strand break at the site of the removed base with both 3'- and 5'-phosphates. This chain is Formamidopyrimidine-DNA glycosylase, found in Listeria monocytogenes serovar 1/2a (strain ATCC BAA-679 / EGD-e).